The primary structure comprises 27 residues: uncharacterized protein (27 aa).

Residues 6–26 form a helical membrane-spanning segment; it reads IIVLGALIALLELIRFLLQLL.

It belongs to the DinQ family.

The protein resides in the cell inner membrane. This is an uncharacterized protein from Escherichia coli (strain K12).